Reading from the N-terminus, the 1704-residue chain is Phospholipid-transporting ATPase ABCA3 (1704 aa).

A glycan (N-linked (GlcNAc...) asparagine) is linked at Asn-14. The chain crosses the membrane as a helical span at residues 22–42 (VLVTVLELFLPLLFSGILIWL). Asn-53, Asn-124, Asn-140, and Asn-228 each carry an N-linked (GlcNAc...) asparagine glycan. Transmembrane regions (helical) follow at residues 251-271 (ISDP…MLSF), 307-327 (AWFL…TLLF), 344-364 (SLVL…SFMV), 373-393 (MAAT…FFVA), and 405-425 (LLSC…IGKF). The region spanning 530–763 (IKIKHLSKVF…YGAGYHMTLV (234 aa)) is the ABC transporter 1 domain. 566–573 (GHNGAGKT) provides a ligand contact to ATP. Asn-620 and Asn-945 each carry an N-linked (GlcNAc...) asparagine glycan. Helical transmembrane passes span 1100–1120 (IALN…ILAV), 1144–1164 (SALL…LVVF), 1183–1203 (LLLM…SFFF), 1213–1233 (LTIF…IMRI), 1245–1265 (LDHV…SNFY), and 1310–1330 (MAAS…NLLW). An N-linked (GlcNAc...) asparagine glycan is attached at Asn-1350. The region spanning 1381–1614 (LIINELSKVY…FGSGYSLQAK (234 aa)) is the ABC transporter 2 domain. 1416–1423 (GFNGAGKT) lines the ATP pocket.

Homooligomer; disulfide-linked. In terms of processing, N-glycosylated. Localization at intracellular vesicles is accompanied by processing of oligosaccharide from high mannose type to complex type. N-linked glycosylation at Asn-124 and Asn-140 is required for stability and efficient anterograde trafficking and prevents from proteasomal degradation. Proteolytically cleaved by CTSL and to a lower extent by CTSB within multivesicular bodies (MVB) and lamellar bodies (LB) leading to a mature form of 150 kDa. As to expression, highly expressed in lung, moderately expressed in stomach, intestine, and kidney and weakly expressed in thyroid, brain, liver, spleen, heart, testis, and thymus.

Its subcellular location is the endosome. The protein resides in the multivesicular body membrane. The protein localises to the cytoplasmic vesicle membrane. It localises to the late endosome membrane. It is found in the lysosome membrane. The enzyme catalyses ATP + H2O + xenobioticSide 1 = ADP + phosphate + xenobioticSide 2.. It carries out the reaction a 1,2-diacyl-sn-glycero-3-phosphocholine(in) + ATP + H2O = a 1,2-diacyl-sn-glycero-3-phosphocholine(out) + ADP + phosphate + H(+). It catalyses the reaction ATP + H2O + phospholipidSide 1 = ADP + phosphate + phospholipidSide 2.. The catalysed reaction is 1,2-dihexadecanoyl-sn-glycero-3-phosphocholine(in) + ATP + H2O = 1,2-dihexadecanoyl-sn-glycero-3-phosphocholine(out) + ADP + phosphate + H(+). The enzyme catalyses cholesterol(in) + ATP + H2O = cholesterol(out) + ADP + phosphate + H(+). It carries out the reaction a 1,2-diacyl-sn-glycero-3-phospho-(1'-sn-glycerol)(in) + ATP + H2O = a 1,2-diacyl-sn-glycero-3-phospho-(1'-sn-glycerol)(out) + ADP + phosphate + H(+). In terms of biological role, catalyzes the ATP-dependent transport of phospholipids such as phosphatidylcholine and phosphoglycerol from the cytoplasm into the lumen side of lamellar bodies, in turn participates in the lamellar bodies biogenesis and homeostasis of pulmonary surfactant. Transports preferentially phosphatidylcholine containing short acyl chains. In addition plays a role as an efflux transporter of miltefosine across macrophage membranes and free cholesterol (FC) through intralumenal vesicles by removing FC from the cell as a component of surfactant and protects cells from free cholesterol toxicity. In Rattus norvegicus (Rat), this protein is Phospholipid-transporting ATPase ABCA3.